A 311-amino-acid chain; its full sequence is DNA-directed RNA polymerase subunit alpha (311 aa).

The interval 1–227 is alpha N-terminal domain (alpha-NTD); it reads MAQFQIECVE…NLFCSLRNLD (227 aa). Residues 242 to 311 are alpha C-terminal domain (alpha-CTD); the sequence is ISQVLIEELQ…GISLPKEKTD (70 aa).

Belongs to the RNA polymerase alpha chain family. In plastids the minimal PEP RNA polymerase catalytic core is composed of four subunits: alpha, beta, beta', and beta''. When a (nuclear-encoded) sigma factor is associated with the core the holoenzyme is formed, which can initiate transcription.

The protein localises to the plastid. The protein resides in the chloroplast. It catalyses the reaction RNA(n) + a ribonucleoside 5'-triphosphate = RNA(n+1) + diphosphate. Functionally, DNA-dependent RNA polymerase catalyzes the transcription of DNA into RNA using the four ribonucleoside triphosphates as substrates. The protein is DNA-directed RNA polymerase subunit alpha of Porphyra purpurea (Red seaweed).